The primary structure comprises 526 residues: MSTIPFRKNYVFKNWAGIYSAKPERYFQPSSIDEVVELVKSARLAEKSLVTVGSGHSPSNMCVTDEWLVNLDRLDKVQKFVEYPELHYADVTVDAGMRLYQLNEFLGAKGYSIQNLGSISEQSVAGIISTGSHGSSPYHGLISSQYVNLTIVNGKGELKFLDAENDPEVFKAALLSVGKIGIIVSATIRVVPGFNIKSTQEVITFENLLKQWDTLWTSSEFIRVWWYPYTRKCVLWRGNKTTDAQNGPAKSWWGTKLGRFFYETLLWISTKIYAPLTPFVEKFVFNRQYGKLEKSSTGDVNVTDSISGFNMDCLFSQFVDEWGCPMDNGLEVLRSLDHSIAQAAINKEFYVHVPMEVRCSNTTLPSEPLDTSKRTNTSPGPVYGNVCRPFLDNTPSHCRFAPLENVTNSQLTLYINATIYRPFGCNTPIHKWFTLFENTMMVAGGKPHWAKNFLGSTTLAAGPVKKDTDYDDFEMRGMALKVEEWYGEDLKKFRKIRKEQDPDNVFLANKQWAIINGIIDPSELSD.

The FAD-binding PCMH-type domain maps to 19-193; it reads YSAKPERYFQ…VSATIRVVPG (175 aa). A Pros-8alpha-FAD histidine modification is found at His-56.

Belongs to the oxygen-dependent FAD-linked oxidoreductase family. In terms of assembly, monomer. It depends on FAD as a cofactor. The N-terminus is blocked.

It is found in the mitochondrion membrane. The catalysed reaction is D-arabinono-1,4-lactone + O2 = dehydro-D-arabinono-1,4-lactone + H2O2 + H(+). It functions in the pathway cofactor biosynthesis; D-erythroascorbate biosynthesis; dehydro-D-arabinono-1,4-lactone from D-arabinose: step 2/2. In terms of biological role, can oxidize L-gulono-1,4-lactone as well as D-arabinono-1,4-lactone and L-galactono-1,4-lactone. In Saccharomyces cerevisiae (strain ATCC 204508 / S288c) (Baker's yeast), this protein is D-arabinono-1,4-lactone oxidase (ALO1).